We begin with the raw amino-acid sequence, 368 residues long: Histidinol-phosphate aminotransferase (368 aa).

The residue at position 229 (K229) is an N6-(pyridoxal phosphate)lysine.

The protein belongs to the class-II pyridoxal-phosphate-dependent aminotransferase family. Histidinol-phosphate aminotransferase subfamily. Homodimer. Requires pyridoxal 5'-phosphate as cofactor.

It catalyses the reaction L-histidinol phosphate + 2-oxoglutarate = 3-(imidazol-4-yl)-2-oxopropyl phosphate + L-glutamate. It participates in amino-acid biosynthesis; L-histidine biosynthesis; L-histidine from 5-phospho-alpha-D-ribose 1-diphosphate: step 7/9. This is Histidinol-phosphate aminotransferase from Acidovorax sp. (strain JS42).